Consider the following 116-residue polypeptide: Venom protein 54.1 (116 aa).

Positions 1 to 19 (MNFQVFSLIFFNFVYYCSC) are cleaved as a signal peptide.

Post-translationally, contains 3 disulfide bonds. As to expression, expressed by the venom gland.

The protein resides in the secreted. This is Venom protein 54.1 from Lychas mucronatus (Chinese swimming scorpion).